The primary structure comprises 82 residues: uncharacterized protein (82 aa).

This is an uncharacterized protein from Methanocaldococcus jannaschii (strain ATCC 43067 / DSM 2661 / JAL-1 / JCM 10045 / NBRC 100440) (Methanococcus jannaschii).